The primary structure comprises 287 residues: Beta-lactamase GES-5 (287 aa).

The N-terminal stretch at 1 to 18 (MRFIHALLLAGIAHSAYA) is a signal peptide. Cys-63 and Cys-233 are disulfide-bonded. Ser-64 functions as the Nucleophile; acyl-ester intermediate in the catalytic mechanism. Residues Ser-64, Ser-125, Asn-127, Thr-230, Thr-232, and Arg-238 each coordinate imipenem.

This sequence belongs to the class-A beta-lactamase family.

It localises to the secreted. The enzyme catalyses a beta-lactam + H2O = a substituted beta-amino acid. Inhibited by the beta-lactamase-blocking agents clavulanic acid, sulbactam and tazobactam, via a covalent binding to Ser-64. In terms of biological role, confers resistance to penicillins, cephalosporins and carbapenems. Has carbapenem-hydrolyzing activity. The protein is Beta-lactamase GES-5 of Klebsiella pneumoniae.